A 31-amino-acid chain; its full sequence is Cliotide T13 (31 aa).

A cross-link (cyclopeptide (Asp-Asn)) is located at residues 1-31; that stretch reads DTTPCGESCVWIPCVSSIVGCSCQNKVCYQN. Intrachain disulfides connect C5/C21, C9/C23, and C14/C28.

Post-translationally, contains 3 disulfide bonds. This is a cyclic peptide. Expressed in seed but not in root nodules.

Probably participates in a plant defense mechanism. Not active against Gram-negative bacterium E.coli ATCC 700926 or Gram-positive bacterium S.aureus ATCC 12600 up to a concentration of 100 uM under low-salt conditions. In Clitoria ternatea (Butterfly pea), this protein is Cliotide T13.